The primary structure comprises 191 residues: Probable DNA replication complex GINS protein PSF1 (191 aa).

Belongs to the GINS1/PSF1 family. In terms of assembly, component of the GINS complex which is a heterotetramer of gins1, gins2, gins3 and gins4.

Its subcellular location is the nucleus. Functionally, the GINS complex plays an essential role in the initiation of DNA replication. This is Probable DNA replication complex GINS protein PSF1 (gins1) from Dictyostelium discoideum (Social amoeba).